Here is an 83-residue protein sequence, read N- to C-terminus: Apolipoprotein C-I, acidic form (83 aa).

The N-terminal stretch at 1–26 (MRLFLSLPVLVVVLSMVLEGPAPAQG) is a signal peptide.

It belongs to the apolipoprotein C1 family.

It is found in the secreted. Its function is as follows. Inhibitor of lipoprotein binding to the low density lipoprotein (LDL) receptor, LDL receptor-related protein, and very low density lipoprotein (VLDL) receptor. Associates with high density lipoproteins (HDL) and the triacylglycerol-rich lipoproteins in the plasma and makes up about 10% of the protein of the VLDL and 2% of that of HDL. Appears to interfere directly with fatty acid uptake and is also the major plasma inhibitor of cholesteryl ester transfer protein (CETP). Binds free fatty acids and reduces their intracellular esterification. Modulates the interaction of APOE with beta-migrating VLDL and inhibits binding of beta-VLDL to the LDL receptor-related protein. The protein is Apolipoprotein C-I, acidic form (APOC1A) of Pongo abelii (Sumatran orangutan).